The chain runs to 326 residues: Cyclin-dependent kinase 6 (326 aa).

Residue methionine 1 is modified to N-acetylmethionine. Phosphotyrosine is present on residues tyrosine 13 and tyrosine 24. Residues 13–300 (YECVAEIGEG…AYSALSHPYF (288 aa)) enclose the Protein kinase domain. ATP-binding positions include 19–27 (IGEGAYGKV) and lysine 43. Threonine 49 and threonine 70 each carry phosphothreonine. Catalysis depends on aspartate 145, which acts as the Proton acceptor. A Phosphothreonine modification is found at threonine 177. An N6-acetyllysine modification is found at lysine 264. Residue threonine 325 is modified to Phosphothreonine.

This sequence belongs to the protein kinase superfamily. CMGC Ser/Thr protein kinase family. CDC2/CDKX subfamily. Interaction with D-type G1 cyclins. Cyclin binding promotes enzyme activation by phosphorylation at Thr-177. Binds to RUNX1, CDKN2D, FBXO7 and CDKN2C/p18-INK4c. Forms a cytoplasmic complex with Hsp90/HSP90AB1 and CDC37. FBXO7-binding promotes D-type cyclin binding. Interacts with Kaposi's sarcoma herpesvirus (KSHV) V-cyclin and herpesvirus saimiri (V-cyclin/ECLF2); the CDK6/V-cyclin complex phosphorylates NPM1 and thus lead to viral reactivation by reducing viral LANA levels. In terms of processing, thr-177 phosphorylation and Tyr-24 dephosphorylation promotes kinase activity. As to expression, expressed ubiquitously. Accumulates in squamous cell carcinomas, proliferating hematopoietic progenitor cells, beta-cells of pancreatic islets of Langerhans, and neuroblastomas. Reduced levels in differentiating cells.

The protein localises to the cytoplasm. The protein resides in the nucleus. Its subcellular location is the cell projection. It localises to the ruffle. It is found in the cytoskeleton. The protein localises to the microtubule organizing center. The protein resides in the centrosome. The catalysed reaction is L-seryl-[protein] + ATP = O-phospho-L-seryl-[protein] + ADP + H(+). The enzyme catalyses L-threonyl-[protein] + ATP = O-phospho-L-threonyl-[protein] + ADP + H(+). Its activity is regulated as follows. Inhibited by INK4 proteins (CDKN2C/p18-INK4c), aminopurvalanol, PD0332991, 4-(Pyrazol-4-yl)-pyrimidines and fisetin, a flavonol inhibitor. Activated by Thr-177 phosphorylation and Tyr-24 dephosphorylation. Stimulated by cyclin from herpesvirus saimiri (V-cyclin/ECLF2). Rapidly down-regulated prior to cell differentiation (e.g. erythroid and osteoblast). Its function is as follows. Serine/threonine-protein kinase involved in the control of the cell cycle and differentiation; promotes G1/S transition. Phosphorylates pRB/RB1 and NPM1. Interacts with D-type G1 cyclins during interphase at G1 to form a pRB/RB1 kinase and controls the entrance into the cell cycle. Involved in initiation and maintenance of cell cycle exit during cell differentiation; prevents cell proliferation and negatively regulates cell differentiation, but is required for the proliferation of specific cell types (e.g. erythroid and hematopoietic cells). Essential for cell proliferation within the dentate gyrus of the hippocampus and the subventricular zone of the lateral ventricles. Required during thymocyte development. Promotes the production of newborn neurons, probably by modulating G1 length. Promotes, at least in astrocytes, changes in patterns of gene expression, changes in the actin cytoskeleton including loss of stress fibers, and enhanced motility during cell differentiation. Prevents myeloid differentiation by interfering with RUNX1 and reducing its transcription transactivation activity, but promotes proliferation of normal myeloid progenitors. Delays senescence. Promotes the proliferation of beta-cells in pancreatic islets of Langerhans. May play a role in the centrosome organization during the cell cycle phases. In Homo sapiens (Human), this protein is Cyclin-dependent kinase 6 (CDK6).